A 127-amino-acid chain; its full sequence is MAQSVPPGDIQTQPGTKIVFNAPYDDKHTYRIKVINSSARRIGYGIKTTNMKRLGVDPPCGVLDPKEAVLLAVSCDAFAFGQEDTNNDRITVEWTNTPDGAAKQFRREWFQGDGMVRRKNLPIEYNP.

Ala2 is modified (N-acetylalanine). An MSP domain is found at 9 to 126; the sequence is DIQTQPGTKI…RRKNLPIEYN (118 aa).

In terms of tissue distribution, sperm.

The protein resides in the cell projection. It localises to the pseudopodium. Its subcellular location is the cytoplasm. The protein localises to the cytoskeleton. Functionally, central component in molecular interactions underlying sperm crawling. Forms an extensive filament system that extends from sperm villipoda, along the leading edge of the pseudopod. This Caenorhabditis elegans protein is Major sperm protein 63 (msp-63).